The following is a 255-amino-acid chain: MDKIEIEEELICSLAVKGEKSIHKLLLNILAIVKQLKTIQSDPVLTYQVSTKAQQQLQSQQLQQPQSIPSSTNNSTNTNTNNSTTTTTTSSTSSTTTPTTTTSTTSPLNSKDSTATTTTKEQPSSPTLPTLNLNFVNDNDKIKELNQNCIQSILALQKTIKEISLLETKISQKPKDNIDNDDTIMKDDNNNSSTSAPTTTTINIEKQDQTSLSNELERLKMDAYQKNCVIKKLIDNMRLLQLSINSMNRTSTGTD.

Residues 58–107 show a composition bias toward low complexity; that stretch reads QSQQLQQPQSIPSSTNNSTNTNTNNSTTTTTTSSTSSTTTPTTTTSTTSP. 2 disordered regions span residues 58-133 and 177-207; these read QSQQ…TLNL and NIDNDDTIMKDDNNNSSTSAPTTTTINIEKQ. Positions 108–133 are enriched in polar residues; it reads LNSKDSTATTTTKEQPSSPTLPTLNL. Over residues 177-189 the composition is skewed to basic and acidic residues; it reads NIDNDDTIMKDDN. A compositionally biased stretch (low complexity) spans 190–201; it reads NNSSTSAPTTTT.

The protein belongs to the Mediator complex subunit 30 family. Highly divergent. As to quaternary structure, component of the Mediator complex.

The protein localises to the nucleus. Functionally, component of the Mediator complex, a coactivator involved in the regulated transcription of nearly all RNA polymerase II-dependent genes. Mediator functions as a bridge to convey information from gene-specific regulatory proteins to the basal RNA polymerase II transcription machinery. Mediator is recruited to promoters by direct interactions with regulatory proteins and serves as a scaffold for the assembly of a functional preinitiation complex with RNA polymerase II and the general transcription factors. In Dictyostelium discoideum (Social amoeba), this protein is Putative mediator of RNA polymerase II transcription subunit 30 (med30).